The primary structure comprises 281 residues: Polyamine aminopropyltransferase (281 aa).

One can recognise a PABS domain in the interval 2 to 236; sequence DLWLKEGQIS…GYWSFTIGSK (235 aa). Q31 contacts S-methyl-5'-thioadenosine. The spermidine site is built by H62 and D86. Residues E106 and 138–139 each bind S-methyl-5'-thioadenosine; that span reads DG. The Proton acceptor role is filled by D156. 156–159 is a binding site for spermidine; that stretch reads DSTD.

It belongs to the spermidine/spermine synthase family. Homodimer or homotetramer.

Its subcellular location is the cytoplasm. The enzyme catalyses S-adenosyl 3-(methylsulfanyl)propylamine + putrescine = S-methyl-5'-thioadenosine + spermidine + H(+). It functions in the pathway amine and polyamine biosynthesis; spermidine biosynthesis; spermidine from putrescine: step 1/1. In terms of biological role, catalyzes the irreversible transfer of a propylamine group from the amino donor S-adenosylmethioninamine (decarboxy-AdoMet) to putrescine (1,4-diaminobutane) to yield spermidine. The polypeptide is Polyamine aminopropyltransferase (Clostridium tetani (strain Massachusetts / E88)).